The primary structure comprises 374 residues: Ribosomal RNA large subunit methyltransferase G (374 aa).

This sequence belongs to the methyltransferase superfamily. RlmG family.

The protein localises to the cytoplasm. The enzyme catalyses guanosine(1835) in 23S rRNA + S-adenosyl-L-methionine = N(2)-methylguanosine(1835) in 23S rRNA + S-adenosyl-L-homocysteine + H(+). Specifically methylates the guanine in position 1835 (m2G1835) of 23S rRNA. This chain is Ribosomal RNA large subunit methyltransferase G, found in Pseudomonas fluorescens (strain ATCC BAA-477 / NRRL B-23932 / Pf-5).